Consider the following 560-residue polypeptide: Chaperonin GroEL 2 (560 aa).

ATP contacts are provided by residues 29–32 (TLGP), 86–90 (DGTTT), G413, 478–480 (NAA), and D494.

Belongs to the chaperonin (HSP60) family. As to quaternary structure, forms a cylinder of 14 subunits composed of two heptameric rings stacked back-to-back. Interacts with the co-chaperonin GroES.

It is found in the cytoplasm. It catalyses the reaction ATP + H2O + a folded polypeptide = ADP + phosphate + an unfolded polypeptide.. Together with its co-chaperonin GroES, plays an essential role in assisting protein folding. The GroEL-GroES system forms a nano-cage that allows encapsulation of the non-native substrate proteins and provides a physical environment optimized to promote and accelerate protein folding. The polypeptide is Chaperonin GroEL 2 (Nostoc sp. (strain PCC 7120 / SAG 25.82 / UTEX 2576)).